Consider the following 121-residue polypeptide: 18 kDa learning-associated protein of slug (121 aa).

Disordered stretches follow at residues 44-67 and 95-121; these read TMKTTEPIQENKTSEGTSTDGSME and AVKKQKQKLNKLKIKKKSGKVSKAIKW. The segment covering 45–64 has biased composition (polar residues); sequence MKTTEPIQENKTSEGTSTDG.

It belongs to the learning-associated protein family. Expressed predominantly in cerebral ganglia (at protein level). The mRNA is highly expressed in cerebral ganglia, and is detected at lower levels in visceral-pedal ganglia, head, and body, but is not detected in the tail.

The protein resides in the cytoplasm. The protein localises to the secreted. Its function is as follows. May be involved in modulating long-term memory formation and retention, at least with respect to odor-taste associative learning. The sequence is that of 18 kDa learning-associated protein of slug from Lehmannia marginata (Tree slug).